A 172-amino-acid polypeptide reads, in one-letter code: MNRQEKSVEISELSKIFSSSGSVVVAHYKGISVAQIKDLRKKVREAGGGVKVAKNRLVKIAVSDTSLKGVSDLFVGQSLIVYSVDPIVAPKISVSFANDNKQFVVLGGILEKDILDQDSIKRIASLPNIDGIRSMIISAIQFNSTRLVNLLNAPQTKIVRAISAFVDKNQQS.

Belongs to the universal ribosomal protein uL10 family. In terms of assembly, part of the ribosomal stalk of the 50S ribosomal subunit. The N-terminus interacts with L11 and the large rRNA to form the base of the stalk. The C-terminus forms an elongated spine to which L12 dimers bind in a sequential fashion forming a multimeric L10(L12)X complex.

In terms of biological role, forms part of the ribosomal stalk, playing a central role in the interaction of the ribosome with GTP-bound translation factors. The protein is Large ribosomal subunit protein uL10 (rplJ) of Liberibacter africanus (Citrus greening disease).